Reading from the N-terminus, the 764-residue chain is Protein translocase subunit SecA 2 (764 aa).

ATP-binding positions include Gln83, 101–105 (GEGKT), and Asp490.

The protein belongs to the SecA family. In terms of assembly, monomer and homodimer. Part of the essential Sec protein translocation apparatus which comprises SecA, SecYEG and auxiliary proteins SecDF. Other proteins may also be involved.

Its subcellular location is the cell membrane. It localises to the cytoplasm. The catalysed reaction is ATP + H2O + cellular proteinSide 1 = ADP + phosphate + cellular proteinSide 2.. Its function is as follows. Part of the Sec protein translocase complex. Interacts with the SecYEG preprotein conducting channel. Has a central role in coupling the hydrolysis of ATP to the transfer of proteins into and across the cell membrane, serving as an ATP-driven molecular motor driving the stepwise translocation of polypeptide chains across the membrane. The polypeptide is Protein translocase subunit SecA 2 (Corynebacterium diphtheriae (strain ATCC 700971 / NCTC 13129 / Biotype gravis)).